A 249-amino-acid polypeptide reads, in one-letter code: Small ribosomal subunit protein uS2 (249 aa).

This sequence belongs to the universal ribosomal protein uS2 family.

This is Small ribosomal subunit protein uS2 from Listeria monocytogenes serovar 1/2a (strain ATCC BAA-679 / EGD-e).